A 374-amino-acid chain; its full sequence is Putative zinc finger MYND domain-containing protein R331 (374 aa).

Positions 328, 331, 341, 344, 350, 354, 362, and 366 each coordinate Zn(2+). The MYND-type zinc finger occupies 328–366 (CFYCNKNIEKPVVCNKCFRIKYCSEKCQSEYNSYHSDDC).

The sequence is that of Putative zinc finger MYND domain-containing protein R331 from Acanthamoeba polyphaga (Amoeba).